The following is a 220-amino-acid chain: Vesicle-associated protein 2-1 (220 aa).

The residue at position 1 (methionine 1) is an N-acetylmethionine. At methionine 1 to lysine 196 the chain is on the cytoplasmic side. Position 2 is an N-acetylthreonine; in Vesicle-associated protein 2-1, N-terminally processed (threonine 2). Positions leucine 9–isoleucine 129 constitute an MSP domain. Residues threonine 133–serine 154 form a disordered region. A coiled-coil region spans residues isoleucine 153 to asparagine 188. The chain crosses the membrane as a helical; Anchor for type IV membrane protein span at residues leucine 197–alanine 217.

This sequence belongs to the VAMP-associated protein (VAP) (TC 9.B.17) family.

The protein localises to the endoplasmic reticulum membrane. Its function is as follows. May play a role in vesicle trafficking. The polypeptide is Vesicle-associated protein 2-1 (PVA21) (Arabidopsis thaliana (Mouse-ear cress)).